Consider the following 461-residue polypeptide: Methylthioribose transporter (461 aa).

The next 12 membrane-spanning stretches (helical) occupy residues 33–53, 56–76, 102–122, 152–172, 185–205, 213–233, 254–274, 301–321, 355–375, 376–396, 409–429, and 432–452; these read LLGI…TVAA, AGPA…LAAF, LLAF…LSAV, MAGA…TAIV, VIVL…IGYV, FMPF…FAYL, VGII…SLVL, VAGI…LALL, TWLT…GTLA, HLVN…VIVL, VPFV…FMYS, and GVTW…YFLY.

This sequence belongs to the amino acid-polyamine-organocation (APC) superfamily.

It is found in the cell membrane. In terms of biological role, involved in import of methylthioribose (MTR) into the cell. The polypeptide is Methylthioribose transporter (Bacillus subtilis (strain 168)).